Reading from the N-terminus, the 159-residue chain is Cytochrome P450 monooxygenase aunB (159 aa).

Cys134 lines the heme pocket.

The protein belongs to the cytochrome P450 family. Heme serves as cofactor.

The catalysed reaction is 2 fonsecin B + NADPH + O2 + H(+) = aurasperone B + NADP(+) + 2 H2O. It carries out the reaction 2 rubrofusarin B + NADPH + O2 + H(+) = aurasperone A + NADP(+) + 2 H2O. Its pathway is secondary metabolite biosynthesis. Functionally, cytochrome P450 monooxygenase; part of the gene cluster that mediates the biosynthesis of aurasperone B, a dimeric gamma-naphthopyrone. The first step in the biosynthesis of aurasperone B is the production of gamma-naphthopyrone precursor YWA1 by the non-reducing polyketide synthase albA, via condensation of one acetyl-CoA starter unit with 6 malonyl-CoA units. YWA1 is then methylated by aunE at position C-6 to yield foncesin which is further methylated at position C-8 by aunD to produce fonsecin B. A key enzyme in the biosynthetic pathway is the cytochrome P450 monooxygenase aunB which catalyzes the oxidative dimerization of fonsecin B to aurasperone B. AunB also catalyzes the oxidative dimerization of rubrofusarin B into aurasperone A. This is Cytochrome P450 monooxygenase aunB from Aspergillus niger (strain ATCC 1015 / CBS 113.46 / FGSC A1144 / LSHB Ac4 / NCTC 3858a / NRRL 328 / USDA 3528.7).